A 406-amino-acid chain; its full sequence is Putative phosphate permease TK2061 (406 aa).

The next 10 helical transmembrane spans lie at 2–22 (AVMD…AWAI), 45–65 (AVLI…KSVT), 82–102 (TVLI…LVIA), 115–135 (IIGG…VNWG), 139–159 (QVVL…FLVF), 182–202 (FWIG…VLHG), 208–228 (GVLF…FLTL), 288–308 (VPVP…GVAT), 324–346 (LTNT…ASWL), and 385–405 (FVTV…LMIV).

It belongs to the inorganic phosphate transporter (PiT) (TC 2.A.20) family.

It is found in the cell membrane. In terms of biological role, potential transporter for phosphate. The protein is Putative phosphate permease TK2061 of Thermococcus kodakarensis (strain ATCC BAA-918 / JCM 12380 / KOD1) (Pyrococcus kodakaraensis (strain KOD1)).